The sequence spans 394 residues: Probable nucleoredoxin 2 (394 aa).

Thioredoxin domains lie at 15–176 (GVGG…QTLE) and 180–327 (SVSG…EMED).

It belongs to the nucleoredoxin family.

It carries out the reaction [protein]-dithiol + NAD(+) = [protein]-disulfide + NADH + H(+). The catalysed reaction is [protein]-dithiol + NADP(+) = [protein]-disulfide + NADPH + H(+). Probable thiol-disulfide oxidoreductase that may participate in various redox reactions. In Oryza sativa subsp. japonica (Rice), this protein is Probable nucleoredoxin 2.